The primary structure comprises 99 residues: High mobility group nucleosome-binding domain-containing protein 3 (99 aa).

Composition is skewed to basic and acidic residues over residues 1-25, 39-53, and 62-72; these read MPKR…EPTR, PEPK…KEPG, and GKKEEKQEAGK. The tract at residues 1–99 is disordered; the sequence is MPKRKSPENT…KTESVDNEGE (99 aa). Residue Ser6 is modified to Phosphoserine. The residue at position 10 (Thr10) is a Phosphothreonine. Phosphoserine is present on residues Ser78 and Ser93. Over residues 81–93 the composition is skewed to basic and acidic residues; that stretch reads GETKAEEAQKTES.

This sequence belongs to the HMGN family. In terms of assembly, interacts with the ligand binding domain of the thyroid receptor (TR) (in vitro). Requires the presence of thyroid hormone for its interaction. Interacts with transcriptional regulator SEHBP. Interacts with nucleosomes.

It is found in the nucleus. Its function is as follows. Binds to nucleosomes, regulating chromatin structure and consequently, chromatin-dependent processes such as transcription, DNA replication and DNA repair. Affects both insulin and glucagon levels and modulates the expression of pancreatic genes involved in insulin secretion. Regulates the expression of the glucose transporter SLC2A2 by binding specifically to its promoter region and recruiting PDX1 and additional transcription factors. Regulates the expression of SLC6A9, a glycine transporter which regulates the glycine concentration in synaptic junctions in the central nervous system, by binding to its transcription start site. May play a role in ocular development and astrocyte function. In Pongo abelii (Sumatran orangutan), this protein is High mobility group nucleosome-binding domain-containing protein 3 (HMGN3).